A 262-amino-acid chain; its full sequence is Glycoprotein gp2 (262 aa).

The interval 1–45 (RRGSPQGGSHTTPHPDRLTPSPDDTYDDDTNHPNGRNNSIEIVPQ) is disordered.

It is found in the virion membrane. Its function is as follows. Virulence factor. The protein is Glycoprotein gp2 of Equus caballus (Horse).